The chain runs to 530 residues: Calnexin homolog 1 (530 aa).

Residues 1–20 (MRQRQLFSVFLLLLAFVSFQ) form the signal peptide. Residues 21-466 (KLCYCDDQTV…EKAEQQPNLT (446 aa)) lie on the Lumenal side of the membrane. The Ca(2+) site is built by serine 34 and aspartate 65. A disulfide bridge links cysteine 108 with cysteine 143. Residues tyrosine 112, lysine 114, tyrosine 134, and aspartate 141 each contribute to the an alpha-D-glucoside site. Residues 216 to 315 (ALIPAKTIPD…KCEAAPGCGE (100 aa)) are disordered. The interval 223–356 (IPDPEDKKPE…RDIPNPDYFE (134 aa)) is p domain (Extended arm). The span at 224 to 240 (PDPEDKKPEDWDERAKI) shows a compositional bias: basic and acidic residues. A run of 5 repeats spans residues 225 to 236 (DPEDKKPEDWDE), 242 to 253 (DPNAVKPEDWDE), 261 to 272 (DEEAEKPEGWLD), 280 to 291 (DPEATKPEDWDD), and 295 to 305 (GMWEAPKIDNP). 4 X approximate repeats stretches follow at residues 225-291 (DPED…DWDD) and 295-352 (GMWE…IPNP). Positions 250-281 (DWDEDAPMEIEDEEAEKPEGWLDDEPEEVDDP) are enriched in acidic residues. Residues cysteine 307 and cysteine 313 are joined by a disulfide bond. 3 consecutive repeat copies span residues 314-324 (GEWKRPMKRNP), 328-338 (GKWSSPLIDNP), and 342-352 (GIWKPRDIPNP). Glutamate 371 is an an alpha-D-glucoside binding site. Aspartate 382 lines the Ca(2+) pocket. N-linked (GlcNAc...) asparagine glycosylation is present at asparagine 464. Residues 467-487 (IGVLVAIVVVFFSLFLKLIFG) form a helical membrane-spanning segment. Residues 488–530 (GKKAAAPVEKKKPEVAESSKSGDEAEKKEETAAPRKRQPRRDN) lie on the Cytoplasmic side of the membrane. Residues 490–530 (KAAAPVEKKKPEVAESSKSGDEAEKKEETAAPRKRQPRRDN) form a disordered region. The span at 495-520 (VEKKKPEVAESSKSGDEAEKKEETAA) shows a compositional bias: basic and acidic residues. At serine 508 the chain carries Phosphoserine. Positions 521 to 530 (PRKRQPRRDN) are enriched in basic residues.

This sequence belongs to the calreticulin family.

It localises to the endoplasmic reticulum membrane. In terms of biological role, calcium-binding protein that interacts with newly synthesized monoglucosylated glycoproteins in the endoplasmic reticulum. It may act in assisting protein assembly and/or in the retention within the ER of unassembled protein subunits. It seems to play a major role in the quality control apparatus of the ER by the retention of incorrectly folded proteins. The chain is Calnexin homolog 1 (CNX1) from Arabidopsis thaliana (Mouse-ear cress).